Consider the following 495-residue polypeptide: MQNIGFAAGSLIKGRWTVVKKIGQGAFGEIFSGKNIINNEQIAIKVEKVDTKKQVLRLEVAVLKKLQLCPYVCRFITCGRHNDYNYMVMELLGENLSELRRKQLDGKFSLGSTLKLGVQMIQSLQAVHDLGYLHRDVKPSNFAIGLNPSKRNITYLIDFGLARRFVLASGEVRPARESTGFRGTARYASINSHLSKDLGRRDDLWSIFYVLIEFAEGQLPWRKLKDKDQIGEMKQKYNTPDLVKDLPPQFSQFMKHLKSLNYEDRPNYVFLQTLLNDCYTSLGLSESTPFDWEVQTNSGASSSSSNTTQQQQQQQQQQQQRNLNQSGLNNSSARLMASPSTIDVEASGKSTQLNNSNNNNNNNNKGLGAENDSSPQPQIIRRNSESNSQIANSSESDNKGSGGGSWNQKSSSPRHKDKNLQDDGGEGSQKHLKASNNNNINNNNNNYNNNNNNNNNSHMNGNGSNSQPIDKIELSHQQQKSSTTKCCSTSKCSVM.

The Protein kinase domain occupies 16-275 (WTVVKKIGQG…PNYVFLQTLL (260 aa)). Residues 22–30 (IGQGAFGEI) and lysine 45 each bind ATP. The Proton acceptor role is filled by aspartate 136. The tract at residues 293–469 (EVQTNSGASS…NGNGSNSQPI (177 aa)) is disordered. Composition is skewed to low complexity over residues 295-333 (QTNSGASSSSSNTTQQQQQQQQQQQQRNLNQSGLNNSSA) and 354-364 (NNSNNNNNNNN). Residues 385–395 (ESNSQIANSSE) show a composition bias toward polar residues. Positions 435–466 (SNNNNINNNNNNYNNNNNNNNNSHMNGNGSNS) are enriched in low complexity.

The protein belongs to the protein kinase superfamily. CK1 Ser/Thr protein kinase family.

This chain is Probable serine/threonine-protein kinase DDB_G0292354, found in Dictyostelium discoideum (Social amoeba).